The following is a 407-amino-acid chain: Imidazolonepropionase (407 aa).

Residues H75 and H77 each contribute to the Fe(3+) site. Zn(2+) contacts are provided by H75 and H77. The 4-imidazolone-5-propanoate site is built by R84, Y142, and H169. Y142 contacts N-formimidoyl-L-glutamate. H232 contributes to the Fe(3+) binding site. H232 provides a ligand contact to Zn(2+). Q235 is a binding site for 4-imidazolone-5-propanoate. D306 contacts Fe(3+). A Zn(2+)-binding site is contributed by D306. Positions 308 and 310 each coordinate N-formimidoyl-L-glutamate. T311 contacts 4-imidazolone-5-propanoate.

Belongs to the metallo-dependent hydrolases superfamily. HutI family. It depends on Zn(2+) as a cofactor. Fe(3+) serves as cofactor.

It is found in the cytoplasm. It catalyses the reaction 4-imidazolone-5-propanoate + H2O = N-formimidoyl-L-glutamate. It participates in amino-acid degradation; L-histidine degradation into L-glutamate; N-formimidoyl-L-glutamate from L-histidine: step 3/3. In terms of biological role, catalyzes the hydrolytic cleavage of the carbon-nitrogen bond in imidazolone-5-propanoate to yield N-formimidoyl-L-glutamate. It is the third step in the universal histidine degradation pathway. In Rhodococcus jostii (strain RHA1), this protein is Imidazolonepropionase.